Consider the following 100-residue polypeptide: Aspartyl/glutamyl-tRNA(Asn/Gln) amidotransferase subunit C (100 aa).

This sequence belongs to the GatC family. In terms of assembly, heterotrimer of A, B and C subunits.

It carries out the reaction L-glutamyl-tRNA(Gln) + L-glutamine + ATP + H2O = L-glutaminyl-tRNA(Gln) + L-glutamate + ADP + phosphate + H(+). The catalysed reaction is L-aspartyl-tRNA(Asn) + L-glutamine + ATP + H2O = L-asparaginyl-tRNA(Asn) + L-glutamate + ADP + phosphate + 2 H(+). Allows the formation of correctly charged Asn-tRNA(Asn) or Gln-tRNA(Gln) through the transamidation of misacylated Asp-tRNA(Asn) or Glu-tRNA(Gln) in organisms which lack either or both of asparaginyl-tRNA or glutaminyl-tRNA synthetases. The reaction takes place in the presence of glutamine and ATP through an activated phospho-Asp-tRNA(Asn) or phospho-Glu-tRNA(Gln). The chain is Aspartyl/glutamyl-tRNA(Asn/Gln) amidotransferase subunit C from Janthinobacterium sp. (strain Marseille) (Minibacterium massiliensis).